A 55-amino-acid chain; its full sequence is Large ribosomal subunit protein bL33 (55 aa).

Belongs to the bacterial ribosomal protein bL33 family.

The polypeptide is Large ribosomal subunit protein bL33 (Rhodopseudomonas palustris (strain BisB18)).